A 192-amino-acid chain; its full sequence is Small ribosomal subunit protein uS5 (192 aa).

The S5 DRBM domain occupies 20-83; that stretch reads FVDRLVHINR…EAAKRGLIRV (64 aa). Positions 165–192 are disordered; the sequence is ARRGLKVSALQARRRDAEPGSADSADAA.

The protein belongs to the universal ribosomal protein uS5 family. Part of the 30S ribosomal subunit. Contacts proteins S4 and S8.

With S4 and S12 plays an important role in translational accuracy. Functionally, located at the back of the 30S subunit body where it stabilizes the conformation of the head with respect to the body. The chain is Small ribosomal subunit protein uS5 from Methylobacterium sp. (strain 4-46).